The primary structure comprises 357 residues: Leucoanthocyanidin dioxygenase (357 aa).

One can recognise a Fe2OG dioxygenase domain in the interval 212 to 311; sequence LLLQMKINYY…RISWAVFCEP (100 aa). 3 residues coordinate Fe cation: His236, Asp238, and His292.

This sequence belongs to the iron/ascorbate-dependent oxidoreductase family. Requires Fe cation as cofactor. It depends on L-ascorbate as a cofactor.

It carries out the reaction a (2R,3S,4S)-leucoanthocyanidin + 2-oxoglutarate + O2 = a 4-H-anthocyanidin with a 3-hydroxy group + succinate + CO2 + 2 H2O. Its pathway is pigment biosynthesis; anthocyanin biosynthesis. Its function is as follows. Oxidation of leucoanthocyanidins into anthocyanidins. The protein is Leucoanthocyanidin dioxygenase (ANS) of Malus domestica (Apple).